The sequence spans 529 residues: Putative cysteine ligase BshC (529 aa).

The stretch at 450–485 (VKQTKGLENLEKRLLKAQKRNLSDQLQRVIDLQCEL) forms a coiled coil.

It belongs to the BshC family.

The chain is Putative cysteine ligase BshC from Flavobacterium johnsoniae (strain ATCC 17061 / DSM 2064 / JCM 8514 / BCRC 14874 / CCUG 350202 / NBRC 14942 / NCIMB 11054 / UW101) (Cytophaga johnsonae).